The chain runs to 635 residues: Threonine--tRNA ligase (635 aa).

The TGS domain occupies 1–61; that stretch reads MINISFPDGS…DNDCKFRILT (61 aa). Residues 242-533 form a catalytic region; sequence DHRKLGRELD…LIEEYAGRFP (292 aa). Residues cysteine 333, histidine 384, and histidine 510 each contribute to the Zn(2+) site.

The protein belongs to the class-II aminoacyl-tRNA synthetase family. Homodimer. It depends on Zn(2+) as a cofactor.

Its subcellular location is the cytoplasm. The catalysed reaction is tRNA(Thr) + L-threonine + ATP = L-threonyl-tRNA(Thr) + AMP + diphosphate + H(+). In terms of biological role, catalyzes the attachment of threonine to tRNA(Thr) in a two-step reaction: L-threonine is first activated by ATP to form Thr-AMP and then transferred to the acceptor end of tRNA(Thr). Also edits incorrectly charged L-seryl-tRNA(Thr). The polypeptide is Threonine--tRNA ligase (Rickettsia rickettsii (strain Sheila Smith)).